The following is a 322-amino-acid chain: Beta-1,4-galactosyltransferase 7 (322 aa).

Residues 1–9 are Cytoplasmic-facing; it reads MVNISTINW. A helical; Signal-anchor for type II membrane protein transmembrane segment spans residues 10-30; the sequence is VFVCGLSFCLGGIAVLSLMPL. Residues 31 to 322 are Lumenal-facing; the sequence is GSDCVCPLSN…TAAAASAVQT (292 aa). Residues Pro82, Arg84, Asp145, and Val146 each coordinate UDP-alpha-D-galactose. Asp147 is a binding site for Mn(2+). UDP-alpha-D-galactose-binding residues include Tyr177, Gly185, Trp207, and Gly208. Leu209 is a beta-D-xylose binding site. Glu210 provides a ligand contact to UDP-alpha-D-galactose. Beta-D-xylose is bound by residues Asp211 and Asp212. The N-linked (GlcNAc...) asparagine glycan is linked to Asn236. Positions 241, 243, and 250 each coordinate UDP-alpha-D-galactose. 2 residues coordinate Mn(2+): His241 and His243. 2 cysteine pairs are disulfide-bonded: Cys255/Cys310 and Cys300/Cys308.

This sequence belongs to the glycosyltransferase 7 family. The cofactor is Mn(2+). In terms of tissue distribution, expressed in male and female adults. Expressed in head.

Its subcellular location is the golgi apparatus membrane. It carries out the reaction 3-O-(beta-D-xylosyl)-L-seryl-[protein] + UDP-alpha-D-galactose = 3-O-(beta-D-galactosyl-(1-&gt;4)-beta-D-xylosyl)-L-seryl-[protein] + UDP + H(+). Its pathway is protein modification; protein glycosylation. In terms of biological role, transfers galactose from UDP-D-Galactose (UDP-Gal) to the acceptor xylose residue in the linkage tetrasaccharide region of the glycosaminoglycan side chain of proteoglycans. No activity towards beta-GlcNAc, beta-Glc, beta-Gal, and beta-GalNAc as acceptors. This Drosophila melanogaster (Fruit fly) protein is Beta-1,4-galactosyltransferase 7.